Consider the following 273-residue polypeptide: MNVSELRLRFANALARIRATKPLVHHITNYVVMNDTANVTLHVGALPVMAHTTEEAAEMTGLAGALVLNIGTLSPAWVDAMLLAGRRANESGIPVVLDPVGAGATAYRTETCLRLLGGLRVAVIRGNSGEIGTLSGAGGVVRGVESVEGVANPAAAAGVLAHRYNTVTVITGQRDIVTDGGRVLVVDNGHEWLTTITGSGCMATALVAAFAAVEPDFLVAAAGALAAYGLAAELAAREARGPASFRTALLDRIYSLTPEQVAEGARVERLRQP.

A substrate-binding site is contributed by M49. ATP-binding residues include R125 and T171. Position 198 (G198) interacts with substrate.

Belongs to the Thz kinase family. The cofactor is Mg(2+).

The enzyme catalyses 5-(2-hydroxyethyl)-4-methylthiazole + ATP = 4-methyl-5-(2-phosphooxyethyl)-thiazole + ADP + H(+). Its pathway is cofactor biosynthesis; thiamine diphosphate biosynthesis; 4-methyl-5-(2-phosphoethyl)-thiazole from 5-(2-hydroxyethyl)-4-methylthiazole: step 1/1. Functionally, catalyzes the phosphorylation of the hydroxyl group of 4-methyl-5-beta-hydroxyethylthiazole (THZ). The chain is Hydroxyethylthiazole kinase from Desulforudis audaxviator (strain MP104C).